We begin with the raw amino-acid sequence, 60 residues long: Large ribosomal subunit protein bL32 (60 aa).

Disordered regions lie at residues Met1–Ala28 and His41–Ala60. Residues Ser9 to His19 are compositionally biased toward basic residues.

It belongs to the bacterial ribosomal protein bL32 family.

The sequence is that of Large ribosomal subunit protein bL32 from Verminephrobacter eiseniae (strain EF01-2).